The primary structure comprises 313 residues: Probable cell division protein WhiA (313 aa).

Residues serine 280–glutamine 313 constitute a DNA-binding region (H-T-H motif).

This sequence belongs to the WhiA family.

Functionally, involved in cell division and chromosome segregation. This is Probable cell division protein WhiA from Lachnoclostridium phytofermentans (strain ATCC 700394 / DSM 18823 / ISDg) (Clostridium phytofermentans).